A 2365-amino-acid polypeptide reads, in one-letter code: Voltage-dependent T-type calcium channel subunit alpha-1H (2365 aa).

The disordered stretch occupies residues 1 to 63; it reads MTEGTLAADE…PGTECGADLG (63 aa). Topologically, residues 1–100 are cytoplasmic; it reads MTEGTLAADE…SWCLRLVSRR (100 aa). Residues 16-36 show a composition bias toward low complexity; the sequence is GASPSAPAAPVRASPASPGVP. The I repeat unit spans residues 87–422; it reads TRPRSWCLRL…LCLVVIATQF (336 aa). Residues 101–119 traverse the membrane as a helical segment; the sequence is WFEHISMLVIMLNCVTLGM. The Extracellular segment spans residues 120–141; the sequence is FRPCEDVECRSERCSILEAFDD. D140 is a Zn(2+) binding site. A helical membrane pass occupies residues 142–160; it reads FIFAFFAVEMVIKMVALGL. Residues 161–169 are Cytoplasmic-facing; sequence FGQKCYLGD. Residues 170–184 form a helical membrane-spanning segment; it reads TWNRLDFFIVMAGMM. The Extracellular portion of the chain corresponds to 185–193; it reads EYSLDGHNV. Residues D189 and H191 each coordinate Zn(2+). Residue N192 is glycosylated (N-linked (GlcNAc...) asparagine). The helical transmembrane segment at 194-212 threads the bilayer; sequence SLSAIRTVRVLRPLRAINR. The Cytoplasmic portion of the chain corresponds to 213-232; that stretch reads VPSMRILVTLLLDTLPMLGN. Residues 233–253 form a helical membrane-spanning segment; that stretch reads VLLLCFFVFFIFGIVGVQLWA. Over 254–394 the chain is Extracellular; the sequence is GLLRNRCFLD…YYVMDAHSFY (141 aa). N271 is a glycosylation site (N-linked (GlcNAc...) asparagine). The helical transmembrane segment at 395-419 threads the bilayer; sequence NFIYFILLIIVGSFFMINLCLVVIA. Topologically, residues 420-790 are cytoplasmic; it reads TQFSETKQRE…SKLRRIVDSK (371 aa). 3 disordered regions span residues 490–573, 618–656, and 737–761; these read VDPS…SESV, PSGA…SPSP, and GDCR…RWRP. Residues 500-532 are compositionally biased toward basic residues; the sequence is GPRRRPRRAGRRTASVHHLVYHHHHHHHHHYHF. A compositionally biased stretch (pro residues) spans 557-566; the sequence is PPSPPSPGHG. The segment covering 621-631 has biased composition (polar residues); it reads AVNSKGSTSSR. An II repeat occupies 776-1015; sequence WASFSSKLRR…LLVAILVEGF (240 aa). The helical transmembrane segment at 791–811 threads the bilayer; that stretch reads YFNRGIMAAILVNTLSMGVEY. The Extracellular portion of the chain corresponds to 812-824; the sequence is HEQPDELTNALEI. A helical membrane pass occupies residues 825 to 846; sequence SNIVFTSMFALEMLLKLLACGP. Residues 847–852 lie on the Cytoplasmic side of the membrane; sequence LGYIRN. The helical transmembrane segment at 853–871 threads the bilayer; the sequence is PYNIFDGIVVIISVWEIVG. Over 872-879 the chain is Extracellular; sequence QADGGLSV. Residues 880–903 traverse the membrane as a helical segment; sequence LRTFRLLRVLKLVRFLPALRRQLV. The Cytoplasmic segment spans residues 904-914; the sequence is VLMRTMDNVAT. A helical transmembrane segment spans residues 915-935; the sequence is FCMLLMLFIFIFSILGMHLFG. Residues 936–987 are Extracellular-facing; sequence CKFSLKTDSGDTVPDRKNFDSLLWAIVTVFQILTQEDWNVVLYNGMASTSSW. Residues 988-1012 form a helical membrane-spanning segment; sequence AALYFVALMTFGNYVLFNLLVAILV. The Cytoplasmic portion of the chain corresponds to 1013 to 1301; the sequence is EGFQAEGDAT…NRLRVSCQKV (289 aa). The segment at 1059–1215 is disordered; that stretch reads PNGHLEGRGS…HRSTMDLCPP (157 aa). Residues 1130–1147 are compositionally biased toward low complexity; the sequence is GPNSAGSSRRSSWNSLGR. The segment covering 1199 to 1209 has biased composition (basic and acidic residues); the sequence is RRAESLGHRST. The stretch at 1292–1569 is one III repeat; sequence NRLRVSCQKV…MFVGVVVENF (278 aa). The helical transmembrane segment at 1302 to 1324 threads the bilayer; it reads IAHKMFDHVVLVFIFLNCITIAL. Residues 1325-1342 lie on the Extracellular side of the membrane; the sequence is ERPDIDPGSTERAFLSVS. A helical transmembrane segment spans residues 1343–1363; sequence NYIFTAIFVVEMMVKVVALGL. Residues 1364-1373 lie on the Cytoplasmic side of the membrane; sequence LWGEHAYLQS. A helical membrane pass occupies residues 1374 to 1393; it reads SWNVLDGLLVLVSLVDIIVA. Over 1394 to 1407 the chain is Extracellular; it reads VASAGGAKILGVLR. Residues 1408–1429 form a helical membrane-spanning segment; sequence VLRLLRTLRPLRVISRAPGLKL. The Cytoplasmic portion of the chain corresponds to 1430 to 1439; it reads VVETLISSLR. A helical membrane pass occupies residues 1440-1463; that stretch reads PIGNIVLICCAFFIIFGILGVQLF. The Extracellular segment spans residues 1464-1540; the sequence is KGKFYYCEGT…DQQPVQNHNP (77 aa). N-linked (GlcNAc...) asparagine glycosylation occurs at N1477. The helical transmembrane segment at 1541–1566 threads the bilayer; the sequence is WMLLYFISFLLIVSFFVLNMFVGVVV. At 1567–1627 the chain is on the cytoplasmic side; that stretch reads ENFHKCRQHQ…RRSIHSLCTS (61 aa). Residues 1613–1874 form an IV repeat; it reads DYSHTRRSIH…VVVAVLMKHL (262 aa). Residues 1628–1648 form a helical membrane-spanning segment; the sequence is HYLDLFITFIICLNVITMSME. At 1649-1662 the chain is on the extracellular side; that stretch reads HYNQPKSLDEALKY. A helical membrane pass occupies residues 1663-1684; it reads CNYVFTIVFVFEAALKLVAFGF. Over 1685-1691 the chain is Cytoplasmic; sequence RRFFKDR. The helical transmembrane segment at 1692–1710 threads the bilayer; it reads WNQLDLAIVLLSIMGIALE. Residues 1711–1724 are Extracellular-facing; the sequence is EIEMNAALPINPTI. A helical membrane pass occupies residues 1725 to 1748; that stretch reads IRIMRVLRIARVLKLLKMATGMRA. Topologically, residues 1749–1762 are cytoplasmic; it reads LLDTVVQALPQVGN. A helical membrane pass occupies residues 1763–1783; the sequence is LGLLFMLLFFIYAALGVELFG. Over 1784–1846 the chain is Extracellular; that stretch reads RLECSEDNPC…KHCLSYLPAL (63 aa). The chain crosses the membrane as a helical span at residues 1847–1874; that stretch reads SPVYFVTFVLVAQFVLVNVVVAVLMKHL. The Cytoplasmic segment spans residues 1875–2365; sequence EESNKEARED…APDDSGDEPV (491 aa). 2 stretches are compositionally biased toward polar residues: residues 1897-1916 and 1967-1983; these read QGST…TEPD and VTSA…SFQV. Disordered stretches follow at residues 1897 to 1920, 1967 to 1999, 2053 to 2264, and 2321 to 2365; these read QGST…TPNL, VTSA…PLCA, APLG…GERW, and ELSM…DEPV. Over residues 2092 to 2102 the composition is skewed to acidic residues; sequence DDAEAADPADE. Residues 2172 to 2187 are compositionally biased toward basic and acidic residues; the sequence is GDGHLESGEVRARASE.

This sequence belongs to the calcium channel alpha-1 subunit (TC 1.A.1.11) family. CACNA1H subfamily. As to quaternary structure, interacts (via N-terminal cytoplasmic domain) with STAC. In response to raising of intracellular calcium, the T-type channels are activated by CaM-kinase II. In terms of tissue distribution, is highly expressed in lumbosacral and thoracolumbar dorsal root ganglion neurons.

The protein resides in the cell membrane. It carries out the reaction Ca(2+)(in) = Ca(2+)(out). In terms of biological role, voltage-sensitive calcium channel that gives rise to T-type calcium currents. T-type calcium channels belong to the 'low-voltage activated (LVA)' group. A particularity of this type of channel is an opening at quite negative potentials, and a voltage-dependent inactivation. T-type channels serve pacemaking functions in both central neurons and cardiac nodal cells and support calcium signaling in secretory cells and vascular smooth muscle. They may also be involved in the modulation of firing patterns of neurons. In the adrenal zona glomerulosa, participates in the signaling pathway leading to aldosterone production in response to either AGT/angiotensin II, or hyperkalemia. This chain is Voltage-dependent T-type calcium channel subunit alpha-1H (Cacna1h), found in Mus musculus (Mouse).